Here is a 539-residue protein sequence, read N- to C-terminus: Glucose-6-phosphate isomerase (539 aa).

The Proton donor role is filled by Glu353. Residues His384 and Lys505 contribute to the active site.

Belongs to the GPI family.

It localises to the cytoplasm. It catalyses the reaction alpha-D-glucose 6-phosphate = beta-D-fructose 6-phosphate. The protein operates within carbohydrate biosynthesis; gluconeogenesis. It functions in the pathway carbohydrate degradation; glycolysis; D-glyceraldehyde 3-phosphate and glycerone phosphate from D-glucose: step 2/4. Catalyzes the reversible isomerization of glucose-6-phosphate to fructose-6-phosphate. This is Glucose-6-phosphate isomerase from Ralstonia pickettii (strain 12J).